A 341-amino-acid polypeptide reads, in one-letter code: tRNA N6-adenosine threonylcarbamoyltransferase (341 aa).

The Fe cation site is built by histidine 111 and histidine 115. Substrate-binding positions include 134–138 (LVSGG), aspartate 167, glycine 180, and asparagine 276. Aspartate 304 contacts Fe cation.

This sequence belongs to the KAE1 / TsaD family. It depends on Fe(2+) as a cofactor.

The protein localises to the cytoplasm. It carries out the reaction L-threonylcarbamoyladenylate + adenosine(37) in tRNA = N(6)-L-threonylcarbamoyladenosine(37) in tRNA + AMP + H(+). Functionally, required for the formation of a threonylcarbamoyl group on adenosine at position 37 (t(6)A37) in tRNAs that read codons beginning with adenine. Is involved in the transfer of the threonylcarbamoyl moiety of threonylcarbamoyl-AMP (TC-AMP) to the N6 group of A37, together with TsaE and TsaB. TsaD likely plays a direct catalytic role in this reaction. The sequence is that of tRNA N6-adenosine threonylcarbamoyltransferase from Pseudomonas fluorescens (strain ATCC BAA-477 / NRRL B-23932 / Pf-5).